Reading from the N-terminus, the 260-residue chain is Ribose-5-phosphate isomerase A (260 aa).

Substrate contacts are provided by residues 33–36 (TGST), 89–92 (DGAD), and 102–105 (KGGG). Glutamate 111 acts as the Proton acceptor in catalysis. Lysine 129 is a binding site for substrate.

Belongs to the ribose 5-phosphate isomerase family. Homodimer.

It catalyses the reaction aldehydo-D-ribose 5-phosphate = D-ribulose 5-phosphate. It functions in the pathway carbohydrate degradation; pentose phosphate pathway; D-ribose 5-phosphate from D-ribulose 5-phosphate (non-oxidative stage): step 1/1. In terms of biological role, catalyzes the reversible conversion of ribose-5-phosphate to ribulose 5-phosphate. The sequence is that of Ribose-5-phosphate isomerase A from Dinoroseobacter shibae (strain DSM 16493 / NCIMB 14021 / DFL 12).